The sequence spans 429 residues: Nocturnin (429 aa).

A mitochondrion-targeting transit peptide spans 1–73 (MYQSPRRLCS…SMGNGTSRLY (73 aa)). Residues 21-68 (RRTLVPGPRRTLAPPVLGSRPKSPQLQAAAASGAARSRPRTVSSMGNG) form a disordered region. Glu193 is a binding site for Mg(2+). Substrate contacts are provided by residues Glu193, 217 to 219 (KPW), Asn261, 284 to 287 (HLKA), and 322 to 324 (DFN). Positions 341–351 (NLNSAYKLLSP) are interaction with PPARG. His412 contacts substrate.

It belongs to the CCR4/nocturin family. Interacts with PPARG. It depends on Mg(2+) as a cofactor. As to expression, highly expressed in the differentiated adipocyte (at protein level). Ubiquitous.

The protein localises to the cytoplasm. It localises to the nucleus. Its subcellular location is the perinuclear region. It is found in the mitochondrion. The enzyme catalyses NADP(+) + H2O = phosphate + NAD(+). The catalysed reaction is NADPH + H2O = phosphate + NADH. Its function is as follows. Phosphatase which catalyzes the conversion of NADP(+) to NAD(+) and of NADPH to NADH. Shows a small preference for NADPH over NADP(+). Represses translation and promotes degradation of target mRNA molecules. Plays an important role in post-transcriptional regulation of metabolic genes under circadian control. Exerts a rhythmic post-transcriptional control of genes necessary for metabolic functions including nutrient absorption, glucose/insulin sensitivity, lipid metabolism, adipogenesis, inflammation and osteogenesis. Plays an important role in favoring adipogenesis over osteoblastogenesis and acts as a key regulator of the adipogenesis/osteogenesis balance. Promotes adipogenesis by facilitating PPARG nuclear translocation which activates its transcriptional activity. Regulates circadian expression of NOS2 in the liver and negatively regulates the circadian expression of IGF1 in the bone. Critical for proper development of early embryos. The polypeptide is Nocturnin (Mus musculus (Mouse)).